The following is a 40-amino-acid chain: Photosystem II reaction center protein J (40 aa).

The helical transmembrane segment at 8–28 threads the bilayer; that stretch reads IPLWLIGTVAGIAVIGLVGVF.

It belongs to the PsbJ family. PSII is composed of 1 copy each of membrane proteins PsbA, PsbB, PsbC, PsbD, PsbE, PsbF, PsbH, PsbI, PsbJ, PsbK, PsbL, PsbM, PsbT, PsbX, PsbY, PsbZ, Psb30/Ycf12, at least 3 peripheral proteins of the oxygen-evolving complex and a large number of cofactors. It forms dimeric complexes.

The protein resides in the plastid. The protein localises to the chloroplast thylakoid membrane. In terms of biological role, one of the components of the core complex of photosystem II (PSII). PSII is a light-driven water:plastoquinone oxidoreductase that uses light energy to abstract electrons from H(2)O, generating O(2) and a proton gradient subsequently used for ATP formation. It consists of a core antenna complex that captures photons, and an electron transfer chain that converts photonic excitation into a charge separation. This Secale cereale (Rye) protein is Photosystem II reaction center protein J.